A 950-amino-acid chain; its full sequence is Kinase suppressor of Ras 2 (950 aa).

The segment at 239-296 is disordered; it reads PPLESGHRSLPPSPRQRHAVRTPPRTPNIVTTVTPPGTPPMRKKNKLKPPGTPPPSSR. A compositionally biased stretch (low complexity) spans 259-273; it reads RTPPRTPNIVTTVTP. Phosphothreonine is present on residues T272 and T276. Residues 412–456 form a Phorbol-ester/DAG-type zinc finger; that stretch reads KHRFSTKYWMSQTCTVCGKGMLFGLKCKNCKLKCHNKCTKEAPPC. 8 residues coordinate Zn(2+): H413, C425, C428, C438, C441, H446, C449, and C456. At S474 the chain carries Phosphoserine; by MARK3. Position 497 is a phosphothreonine (T497). The segment at 498–556 is disordered; it reads LPKTNKINKDHIPVPYQPDSSSNPSSTTSSTPSSPAPPLPPSATPPSPLHPSPQCTRQQ. Low complexity predominate over residues 517–530; sequence SSSNPSSTTSSTPS. Residues 531–548 show a composition bias toward pro residues; sequence SPAPPLPPSATPPSPLHP. One can recognise a Protein kinase domain in the interval 666-931; it reads LEIGELIGKG…TKLMDMLEKL (266 aa). Residue 672-680 participates in ATP binding; that stretch reads IGKGRFGQV. The active-site Proton donor/acceptor is the D786. Residues K788 and D803 each coordinate ATP.

It belongs to the protein kinase superfamily. TKL Ser/Thr protein kinase family. In terms of assembly, heterodimerizes (via N-terminus) with BRAF (via N-terminus) in a MAP2K1/MEK1-dependent manner. Interacts with BRAF; this increases the low intrinsic protein kinase activity of KSR2. Interacts with MAP2K1, forming a heterodimer that can dimerize to form a heterotetramer. Interacts with MAP3K8, MAPK, RAS and RAF. In terms of processing, phosphorylated on Ser-474 by MARK3. In terms of tissue distribution, mainly expressed in brain and kidney.

The protein resides in the cytoplasm. The protein localises to the membrane. It catalyses the reaction L-seryl-[protein] + ATP = O-phospho-L-seryl-[protein] + ADP + H(+). It carries out the reaction L-threonyl-[protein] + ATP = O-phospho-L-threonyl-[protein] + ADP + H(+). Kinase activity is inhibited by ASC24. Location-regulated scaffold connecting MEK to RAF. Has very low protein kinase activity and can phosphorylate MAP2K1 at several Ser and Thr residues with very low efficiency (in vitro). Acts as MAP2K1/MEK1-dependent allosteric activator of BRAF; upon binding to MAP2K1/MEK1, dimerizes with BRAF and promotes BRAF-mediated phosphorylation of MAP2K1/MEK1. Interaction with BRAF enhances KSR2-mediated phosphorylation of MAP2K1 (in vitro). Blocks MAP3K8 kinase activity and MAP3K8-mediated signaling. Acts as a negative regulator of MAP3K3-mediated activation of ERK, JNK and NF-kappa-B pathways, inhibiting MAP3K3-mediated interleukin-8 production. This is Kinase suppressor of Ras 2 from Homo sapiens (Human).